Here is a 447-residue protein sequence, read N- to C-terminus: Asparagine--tRNA ligase (447 aa).

It belongs to the class-II aminoacyl-tRNA synthetase family. In terms of assembly, homodimer.

It is found in the cytoplasm. It catalyses the reaction tRNA(Asn) + L-asparagine + ATP = L-asparaginyl-tRNA(Asn) + AMP + diphosphate + H(+). The sequence is that of Asparagine--tRNA ligase from Lactococcus lactis subsp. cremoris (strain SK11).